The sequence spans 175 residues: DASH complex subunit DAM1 (175 aa).

The interval 1-39 is disordered; that stretch reads MAPEDTNPQSSHRRTRSTSRSRPTTPLRPSSRSSFRSSA. Residues 20–39 show a composition bias toward low complexity; the sequence is RSRPTTPLRPSSRSSFRSSA.

Belongs to the DASH complex DAM1 family. In terms of assembly, component of the DASH complex consisting of ASK1, DAD1, DAD2, DAD3, DAD4, DAM1, DUO1, HSK3, SPC19 and SPC34, with a stoichiometry of one copy of each subunit per complex. Multiple DASH complexes oligomerize to form a ring that encircles spindle microtubules and organizes the rod-like NDC80 complexes of the outer kinetochore. DASH complex oligomerization strengthens microtubule attachments. On cytoplasmic microtubules, DASH complexes appear to form patches instead of rings.

Its subcellular location is the chromosome. It localises to the centromere. The protein resides in the kinetochore. The protein localises to the cytoplasm. It is found in the cytoskeleton. Its subcellular location is the spindle. It localises to the nucleus. Its function is as follows. Component of the DASH complex that connects microtubules with kinetochores and couples microtubule depolymerisation to chromosome movement; it is involved in retrieving kinetochores to the spindle poles before their re-orientation on the spindle in early mitosis and allows microtubule depolymerization to pull chromosomes apart and resist detachment during anaphase. Kinetochores, consisting of a centromere-associated inner segment and a microtubule-contacting outer segment, play a crucial role in chromosome segregation by mediating the physical connection between centromeric DNA and microtubules. Kinetochores also serve as an input point for the spindle assembly checkpoint, which delays anaphase until all chromosomes have bioriented on the mitotic spindle. This Chaetomium thermophilum (strain DSM 1495 / CBS 144.50 / IMI 039719) (Thermochaetoides thermophila) protein is DASH complex subunit DAM1.